The primary structure comprises 127 residues: Protein ApaG (127 aa).

An ApaG domain is found at 3-127 (EGKKYEIAVK…FILSVPRILH (125 aa)).

This chain is Protein ApaG, found in Nitrosospira multiformis (strain ATCC 25196 / NCIMB 11849 / C 71).